The sequence spans 761 residues: Probable ubiquitin carboxyl-terminal hydrolase creB (761 aa).

The segment at Met-1–Pro-45 is disordered. Basic and acidic residues predominate over residues Leu-36–Pro-45. Positions Tyr-55–Thr-468 constitute a USP domain. Residue Cys-64 is the Nucleophile of the active site. Disordered stretches follow at residues Glu-113–Glu-146 and Pro-242–Asn-269. Polar residues predominate over residues Ser-256 to Asn-269. Catalysis depends on His-419, which acts as the Proton acceptor. The segment at Leu-496 to Ser-761 is disordered. Over residues Pro-555–Pro-566 the composition is skewed to pro residues. Residues Lys-577–Leu-640 adopt a coiled-coil conformation. Residues Ala-580 to Gln-649 are compositionally biased toward basic and acidic residues. Positions Arg-655–Arg-666 are enriched in basic residues. The span at Ser-692–Pro-710 shows a compositional bias: low complexity. The span at His-712 to Gly-722 shows a compositional bias: pro residues. Basic and acidic residues predominate over residues Thr-725–Gly-743. Basic residues predominate over residues His-744–Ser-761.

Belongs to the peptidase C19 family. In terms of assembly, interacts with creA, creC and qutD.

It carries out the reaction Thiol-dependent hydrolysis of ester, thioester, amide, peptide and isopeptide bonds formed by the C-terminal Gly of ubiquitin (a 76-residue protein attached to proteins as an intracellular targeting signal).. Functionally, ubiquitin thioesterase component of the regulatory network controlling carbon source utilization through ubiquitination and deubiquitination involving creA, creB, creC, creD and acrB. Deubiquitinates the creA catabolic repressor and the quinate permease qutD. Also plays a role in response to carbon starvation and the control of extracellular proteases activity. This Neosartorya fischeri (strain ATCC 1020 / DSM 3700 / CBS 544.65 / FGSC A1164 / JCM 1740 / NRRL 181 / WB 181) (Aspergillus fischerianus) protein is Probable ubiquitin carboxyl-terminal hydrolase creB (creB).